Consider the following 738-residue polypeptide: MIGNDRWVTEIETGPVTEARPDTNAREPGDRTPAAPPAATPAATTDQLPEDRYLNRELSWLEFNARVLALAADDSMPLLERAKFLAVFASNLDEFYMVRVAGLKRRDQMGLSALSADGLTPREQLGRIGEQTQHIASRHARVFRDSVLPALGEEGIYVVTWADLDQAEREQLSTYFHEQVFPVLTPLAVDPAHPFPFVSGLSLNLAVTVRQPEDGGQHFARVKVPDNVDRFVELGGTDTDGAEGAAVHRFLPLEELIAAFLPVLFPGMEIVEHHAFRITRNADFEVEEDRDEDLLQALERELARRRFGSPVRLEVADDMTEGMLELLLRELDVHPGDVIEVPGLLDLSSLWQIYGLDRPALKDRTFVPATHPAFAERETPKSIFATLREGDVLVHHPYYSFSTSVQRFIEQAAADPNVLAIKQTLYRTSGDSPIVRALIDAAEAGKQVVALVEVKARFDEQANIRWARALEQAGVHVAYGIVGLKTHCKTALVVRREGPVIRRYCHIGTGNYNSKTARLYEDVGLLTAAPDIGADLTDLFNSLTGYSRKLSYRNLLVAPHGIRAGIIERVEREVAAHLEHGPQAGKGHIRLKMNALVDEQVTDALYRASQVGVRIEVVVRGICALRPGAEGFSENITARSILGRFLEHSRILHFRAIDEFWIGSADMMHRNLDRRVEVMAQVKDPRLTAQLDDLFESALDPATRCWELGPDGQWTASPQEGRTVRDHQVSLMERHRSP.

The tract at residues 1-48 (MIGNDRWVTEIETGPVTEARPDTNAREPGDRTPAAPPAATPAATTDQL) is disordered. The segment covering 19–30 (ARPDTNAREPGD) has biased composition (basic and acidic residues). Asn-91 lines the ATP pocket. Mg(2+) contacts are provided by Arg-427 and Arg-457. His-487 (phosphohistidine intermediate) is an active-site residue. Positions 520, 620, and 648 each coordinate ATP.

It belongs to the polyphosphate kinase 1 (PPK1) family. The cofactor is Mg(2+). Post-translationally, an intermediate of this reaction is the autophosphorylated ppk in which a phosphate is covalently linked to a histidine residue through a N-P bond.

It catalyses the reaction [phosphate](n) + ATP = [phosphate](n+1) + ADP. Its function is as follows. Catalyzes the reversible transfer of the terminal phosphate of ATP to form a long-chain polyphosphate (polyP). The sequence is that of Polyphosphate kinase from Mycobacterium ulcerans (strain Agy99).